Consider the following 177-residue polypeptide: MSDMTTIARPYAKAAFDFAVDKDQLDQWGQMLSFATEVTKNEQMNELLKGSVSADKLAEIFVAVCGEQVDAHGQNLIKVMAENGRLTALPDVCEQFFLLKKEHEKEIDVEVISASELSDEQLANIGSKLEVRLERKVKLNCSVDETLLGGVIIRAGDLVIDNSARGRLNRLSDALQS.

Belongs to the ATPase delta chain family. F-type ATPases have 2 components, F(1) - the catalytic core - and F(0) - the membrane proton channel. F(1) has five subunits: alpha(3), beta(3), gamma(1), delta(1), epsilon(1). F(0) has three main subunits: a(1), b(2) and c(10-14). The alpha and beta chains form an alternating ring which encloses part of the gamma chain. F(1) is attached to F(0) by a central stalk formed by the gamma and epsilon chains, while a peripheral stalk is formed by the delta and b chains.

The protein localises to the cell inner membrane. In terms of biological role, f(1)F(0) ATP synthase produces ATP from ADP in the presence of a proton or sodium gradient. F-type ATPases consist of two structural domains, F(1) containing the extramembraneous catalytic core and F(0) containing the membrane proton channel, linked together by a central stalk and a peripheral stalk. During catalysis, ATP synthesis in the catalytic domain of F(1) is coupled via a rotary mechanism of the central stalk subunits to proton translocation. Its function is as follows. This protein is part of the stalk that links CF(0) to CF(1). It either transmits conformational changes from CF(0) to CF(1) or is implicated in proton conduction. The chain is ATP synthase subunit delta 1 from Vibrio campbellii (strain ATCC BAA-1116).